Reading from the N-terminus, the 35-residue chain is uncharacterized protein (35 aa).

Residues 1–27 (MDQNEANIYNENNENNENNENENCQNE) show a composition bias toward low complexity. Residues 1–35 (MDQNEANIYNENNENNENNENENCQNEPIRIKIII) are disordered.

This is an uncharacterized protein from Dictyostelium discoideum (Social amoeba).